Reading from the N-terminus, the 312-residue chain is Methionyl-tRNA formyltransferase (312 aa).

Position 109-112 (109-112) interacts with (6S)-5,6,7,8-tetrahydrofolate; sequence SLLP.

This sequence belongs to the Fmt family.

The catalysed reaction is L-methionyl-tRNA(fMet) + (6R)-10-formyltetrahydrofolate = N-formyl-L-methionyl-tRNA(fMet) + (6S)-5,6,7,8-tetrahydrofolate + H(+). Functionally, attaches a formyl group to the free amino group of methionyl-tRNA(fMet). The formyl group appears to play a dual role in the initiator identity of N-formylmethionyl-tRNA by promoting its recognition by IF2 and preventing the misappropriation of this tRNA by the elongation apparatus. The protein is Methionyl-tRNA formyltransferase of Listeria monocytogenes serovar 1/2a (strain ATCC BAA-679 / EGD-e).